A 177-amino-acid polypeptide reads, in one-letter code: PRELI domain-containing protein 2 (177 aa).

In terms of domain architecture, PRELI/MSF1 spans 1–175 (MGVTVDVHQV…LLKEQCGSPL (175 aa)).

The protein is PRELI domain-containing protein 2 (Prelid2) of Mus musculus (Mouse).